We begin with the raw amino-acid sequence, 232 residues long: Ubiquinone biosynthesis O-methyltransferase (232 aa).

Residues Arg-36, Gly-55, Asp-76, and Met-120 each coordinate S-adenosyl-L-methionine.

The protein belongs to the methyltransferase superfamily. UbiG/COQ3 family.

It catalyses the reaction a 3-demethylubiquinol + S-adenosyl-L-methionine = a ubiquinol + S-adenosyl-L-homocysteine + H(+). It carries out the reaction a 3-(all-trans-polyprenyl)benzene-1,2-diol + S-adenosyl-L-methionine = a 2-methoxy-6-(all-trans-polyprenyl)phenol + S-adenosyl-L-homocysteine + H(+). It functions in the pathway cofactor biosynthesis; ubiquinone biosynthesis. Functionally, O-methyltransferase that catalyzes the 2 O-methylation steps in the ubiquinone biosynthetic pathway. This chain is Ubiquinone biosynthesis O-methyltransferase, found in Thiobacillus denitrificans (strain ATCC 25259 / T1).